The following is a 204-amino-acid chain: Small ribosomal subunit protein uS4 (204 aa).

A disordered region spans residues 1–46 (MSKRHSSKYKIDRRMGENIWGRPKSPVNRREYGPGQHGQRRRSKIS). An S4 RNA-binding domain is found at 94 to 157 (RRLDMIVYRA…QEMALVLEAQ (64 aa)).

This sequence belongs to the universal ribosomal protein uS4 family. As to quaternary structure, part of the 30S ribosomal subunit. Contacts protein S5. The interaction surface between S4 and S5 is involved in control of translational fidelity.

In terms of biological role, one of the primary rRNA binding proteins, it binds directly to 16S rRNA where it nucleates assembly of the body of the 30S subunit. Functionally, with S5 and S12 plays an important role in translational accuracy. This is Small ribosomal subunit protein uS4 from Zymomonas mobilis subsp. mobilis (strain ATCC 31821 / ZM4 / CP4).